We begin with the raw amino-acid sequence, 307 residues long: Histone deacetylase HDT1 (307 aa).

Over residues 98–112 the composition is skewed to acidic residues; it reads EDEMDLDSEDEDEEL. The tract at residues 98–280 is disordered; that stretch reads EDEMDLDSED…KSGGSVPCKP (183 aa). Residues 119–132 are compositionally biased toward basic and acidic residues; sequence ENGKADEKKQKSQE. Residues 151–197 show a composition bias toward acidic residues; it reads DDDSDEDETDDSDEDETDDSDEGLSSEEGDDDSSDEDDTSDDEEEDT. The span at 198–211 shows a compositional bias: basic and acidic residues; it reads PTPKKPEVGKKRPA. Positions 265–277 are enriched in low complexity; it reads SPKSAPKSGGSVP. The segment at 276-299 adopts a C2H2-type; degenerate zinc-finger fold; that stretch reads VPCKPCSKSFISETALQAHSRAKM.

It belongs to the histone deacetylase HD2 family. Multimer. Isolated as a trimer composed of 3 proteins of 39, 42 and 45 kDa, possibly a homotrimer with different phosphorylation status or a heterotrimer with HDT2 and/or HDT3. Post-translationally, the N-terminus is blocked. In terms of processing, phosphorylated. Required for enzyme activity.

It is found in the nucleus. The protein localises to the nucleolus. With respect to regulation, inhibited by 3-(4-Aroyl-1-methyl-1H-pyrrol-2-yl)-N-hydroxy-2-propenamides. 3-(1-methyl-4-phenylacetyl-1H-pyrrol-2-yl)-N-hydroxy-2-propenamide 1b and 3-[1-methyl-4-(3-phenyl-2-propenoyl)-1H-pyrrol-2-yl]-N-hydroxy-2-propenamide 1c are very potent inhibitors. Its function is as follows. Mediates the deacetylation of lysine residues on the N-terminal part of the core histones (H2A, H2B, H3 and H4). Histone deacetylation gives a tag for epigenetic repression and plays an important role in transcriptional regulation, cell cycle progression and developmental events. Able to deacetylate all 4 core histones. The chain is Histone deacetylase HDT1 (HDT1) from Zea mays (Maize).